The chain runs to 158 residues: Ribosome maturation factor RimP (158 aa).

This sequence belongs to the RimP family.

It is found in the cytoplasm. Functionally, required for maturation of 30S ribosomal subunits. The chain is Ribosome maturation factor RimP from Pseudomonas fluorescens (strain ATCC BAA-477 / NRRL B-23932 / Pf-5).